The primary structure comprises 75 residues: UPF0352 protein KPN78578_25810 (75 aa).

It belongs to the UPF0352 family.

The chain is UPF0352 protein KPN78578_25810 from Klebsiella pneumoniae subsp. pneumoniae (strain ATCC 700721 / MGH 78578).